Reading from the N-terminus, the 145-residue chain is Probable thioredoxin-2 (145 aa).

In terms of domain architecture, Thioredoxin spans 39-144 (VFDIDSVEDF…LDDFIEDVLA (106 aa)). Residues cysteine 68 and cysteine 71 each act as nucleophile in the active site. Cysteine 68 and cysteine 71 are oxidised to a cystine.

The protein belongs to the thioredoxin family.

Functionally, participates in various redox reactions through the reversible oxidation of its active center dithiol to a disulfide and catalyzes dithiol-disulfide exchange reactions. This Caenorhabditis elegans protein is Probable thioredoxin-2 (trx-2).